A 673-amino-acid chain; its full sequence is G-protein-signaling modulator 1 (673 aa).

A mediates association with membranes region spans residues 1-507 (MASPAPPAAE…DLLSKFQSSR (507 aa)). TPR repeat units lie at residues 28–61 (CLEL…GTED), 66–99 (SAIY…ARTI), 106–139 (AKAS…AQEQ), 146–178 (ARAL…PPDV), 180–199 (ETLH…VKEL), 206–239 (GRAY…AKEF), 246–279 (RRAY…SRQI), 286–319 (AQAC…AQEL), and 326–359 (GRAC…SQEI). The interaction with STK11/LKB1 stretch occupies residues 361–485 (DRNGELTARM…VRVQVPRTGI (125 aa)). Residue Ser410 is modified to Phosphoserine. Arg418 is subject to Omega-N-methylarginine. The segment covering 420–439 (PLDREQNGETHHTGDWRGPS) has biased composition (basic and acidic residues). A disordered region spans residues 420–477 (PLDREQNGETHHTGDWRGPSRDSLPLPMRSRKYQEGPDAIERRPREGSHSPLDSADVR). A phosphoserine mark is found at Ser442, Ser467, Ser469, Ser490, and Ser491. Over residues 451–467 (KYQEGPDAIERRPREGS) the composition is skewed to basic and acidic residues. In terms of domain architecture, GoLoco 1 spans 493 to 515 (EECFFDLLSKFQSSRMDDQRCPL). The tract at residues 510-544 (DQRCPLEEGQAGAAEATAAPTLEERAAQPSVTASP) is disordered. The span at 516–530 (EEGQAGAAEATAAPT) shows a compositional bias: low complexity. A phosphoserine mark is found at Ser543 and Ser567. 3 consecutive GoLoco domains span residues 546 to 568 (TEEF…RASV), 594 to 616 (GDEF…RCPP), and 628 to 650 (DEDF…RVDL). Disordered regions lie at residues 609-628 (IDDQ…TMPD) and 645-673 (EQRV…PGAS). Ser653 bears the Phosphoserine mark.

This sequence belongs to the GPSM family. As to quaternary structure, interacts with INSC/inscuteable and FRMPD1. Interacts with GNAI1, GNAI2 and GNAI3 preferentially in their GDP-bound state. May also interact with GNAO1. Interacts with STK11/LKB1 and MACF1. Post-translationally, phosphorylation regulates interaction with G(i/o) alpha. In terms of tissue distribution, isoform 4 is specifically expressed in brain by neurons and also detected in testis, liver, kidney, heart and pancreas (at protein level). Highly expressed in cerebellum and subventricular zone-olfactory bulb system. Isoform 2 and isoform 3 are specifically expressed in heart and are also detected in brain.

It localises to the endoplasmic reticulum membrane. The protein localises to the golgi apparatus membrane. It is found in the cell membrane. Its subcellular location is the cytoplasm. The protein resides in the cytosol. Guanine nucleotide dissociation inhibitor (GDI) which functions as a receptor-independent activator of heterotrimeric G-protein signaling. Keeps G(i/o) alpha subunit in its GDP-bound form thus uncoupling heterotrimeric G-proteins signaling from G protein-coupled receptors. Controls spindle orientation and asymmetric cell fate of cerebral cortical progenitors. May also be involved in macroautophagy in intestinal cells. May play a role in drug addiction. This Rattus norvegicus (Rat) protein is G-protein-signaling modulator 1 (Gpsm1).